The primary structure comprises 196 residues: ATP-dependent Clp protease proteolytic subunit (196 aa).

Ser-96 functions as the Nucleophile in the catalytic mechanism. Residue His-121 is part of the active site.

Belongs to the peptidase S14 family. In terms of assembly, fourteen ClpP subunits assemble into 2 heptameric rings which stack back to back to give a disk-like structure with a central cavity, resembling the structure of eukaryotic proteasomes.

Its subcellular location is the cytoplasm. The enzyme catalyses Hydrolysis of proteins to small peptides in the presence of ATP and magnesium. alpha-casein is the usual test substrate. In the absence of ATP, only oligopeptides shorter than five residues are hydrolyzed (such as succinyl-Leu-Tyr-|-NHMec, and Leu-Tyr-Leu-|-Tyr-Trp, in which cleavage of the -Tyr-|-Leu- and -Tyr-|-Trp bonds also occurs).. Its function is as follows. Cleaves peptides in various proteins in a process that requires ATP hydrolysis. Has a chymotrypsin-like activity. Plays a major role in the degradation of misfolded proteins. This is ATP-dependent Clp protease proteolytic subunit from Streptococcus salivarius.